A 114-amino-acid chain; its full sequence is Iron-sulfur cluster insertion protein ErpA (114 aa).

Iron-sulfur cluster is bound by residues Cys-42, Cys-106, and Cys-108.

This sequence belongs to the HesB/IscA family. In terms of assembly, homodimer. Requires iron-sulfur cluster as cofactor.

Its function is as follows. Required for insertion of 4Fe-4S clusters for at least IspG. In Pseudoalteromonas atlantica (strain T6c / ATCC BAA-1087), this protein is Iron-sulfur cluster insertion protein ErpA.